A 305-amino-acid chain; its full sequence is Aspartate carbamoyltransferase catalytic subunit (305 aa).

Carbamoyl phosphate contacts are provided by Arg58 and Thr59. Lys86 lines the L-aspartate pocket. Carbamoyl phosphate is bound by residues Arg108, His136, and Gln139. L-aspartate contacts are provided by Arg169 and Arg223. Positions 264 and 265 each coordinate carbamoyl phosphate.

This sequence belongs to the aspartate/ornithine carbamoyltransferase superfamily. ATCase family. In terms of assembly, heterododecamer (2C3:3R2) of six catalytic PyrB chains organized as two trimers (C3), and six regulatory PyrI chains organized as three dimers (R2).

The catalysed reaction is carbamoyl phosphate + L-aspartate = N-carbamoyl-L-aspartate + phosphate + H(+). It participates in pyrimidine metabolism; UMP biosynthesis via de novo pathway; (S)-dihydroorotate from bicarbonate: step 2/3. In terms of biological role, catalyzes the condensation of carbamoyl phosphate and aspartate to form carbamoyl aspartate and inorganic phosphate, the committed step in the de novo pyrimidine nucleotide biosynthesis pathway. This chain is Aspartate carbamoyltransferase catalytic subunit, found in Syntrophobacter fumaroxidans (strain DSM 10017 / MPOB).